The chain runs to 451 residues: tRNA-2-methylthio-N(6)-dimethylallyladenosine synthase (451 aa).

The MTTase N-terminal domain maps to 6-122; sequence RHYHITTFGC…LQDLLEQVFN (117 aa). [4Fe-4S] cluster-binding residues include Cys-15, Cys-51, Cys-85, Cys-157, Cys-161, and Cys-164. The Radical SAM core domain occupies 143-380; sequence RDSKITAWVN…NHLVGVKAAD (238 aa). A TRAM domain is found at 383-447; the sequence is QRYMGRIEEV…PFSLTGEVKE (65 aa).

It belongs to the methylthiotransferase family. MiaB subfamily. Monomer. The cofactor is [4Fe-4S] cluster.

The protein resides in the cytoplasm. It carries out the reaction N(6)-dimethylallyladenosine(37) in tRNA + (sulfur carrier)-SH + AH2 + 2 S-adenosyl-L-methionine = 2-methylsulfanyl-N(6)-dimethylallyladenosine(37) in tRNA + (sulfur carrier)-H + 5'-deoxyadenosine + L-methionine + A + S-adenosyl-L-homocysteine + 2 H(+). Catalyzes the methylthiolation of N6-(dimethylallyl)adenosine (i(6)A), leading to the formation of 2-methylthio-N6-(dimethylallyl)adenosine (ms(2)i(6)A) at position 37 in tRNAs that read codons beginning with uridine. In Trichodesmium erythraeum (strain IMS101), this protein is tRNA-2-methylthio-N(6)-dimethylallyladenosine synthase.